The sequence spans 414 residues: Imidazolonepropionase (414 aa).

The Fe(3+) site is built by His73 and His75. Zn(2+)-binding residues include His73 and His75. 4-imidazolone-5-propanoate is bound by residues Arg82, Tyr145, and His178. Tyr145 provides a ligand contact to N-formimidoyl-L-glutamate. His249 provides a ligand contact to Fe(3+). Zn(2+) is bound at residue His249. Gln252 serves as a coordination point for 4-imidazolone-5-propanoate. Asp324 is a binding site for Fe(3+). Residue Asp324 coordinates Zn(2+). 2 residues coordinate N-formimidoyl-L-glutamate: Asn326 and Gly328. Position 329 (Ser329) interacts with 4-imidazolone-5-propanoate.

It belongs to the metallo-dependent hydrolases superfamily. HutI family. The cofactor is Zn(2+). Fe(3+) is required as a cofactor.

The protein resides in the cytoplasm. The catalysed reaction is 4-imidazolone-5-propanoate + H2O = N-formimidoyl-L-glutamate. It functions in the pathway amino-acid degradation; L-histidine degradation into L-glutamate; N-formimidoyl-L-glutamate from L-histidine: step 3/3. Functionally, catalyzes the hydrolytic cleavage of the carbon-nitrogen bond in imidazolone-5-propanoate to yield N-formimidoyl-L-glutamate. It is the third step in the universal histidine degradation pathway. The chain is Imidazolonepropionase from Shewanella pealeana (strain ATCC 700345 / ANG-SQ1).